Reading from the N-terminus, the 568-residue chain is MELFYWCLLCLLLPLTSRTQKLPTRDEELFQMQIRDKEFFHDSSVIPDGAEVSSYLFRDTPRRYFFMVEEDNTPLSVTVTPCDAPLEWKLSLQELHEGSSADGSGDPELLDQQKQQMTDVEGTELFSYKGNDVEYFLSSSSPSGLYQLELLSTEKDTHFKVYATTTPESDQPYPELPYDPRVDVTSFGRTTVTLAWKPSPTASILKQPIEYCVVINKEHNFKSLCAAETKMNADDAFMVAPKPGLDFNPFDFAHFGFPTDNLGKDRSLLAKPSPKVGRHVYWRPKVDIQKICIGNKNIFTVSDLKPDTQYYFDVFMVNTNTNMSTAYVGAFVRTKEEAKQKTVELKDGRVTDVFVKRKGKKFLRFAPVSSHQKVTFFIHSCMDAVQVQVRRDGRLLLSQNVEGIRQFQLRGKPKGKYLIRLKGNRKGASKLKILATTRPSKHAFPSLPEDTRIKAFDKLRTCSSVTVAWLGTQERRKFCIYRKEVDGNYSEDQKRREQNQCLGPDTRKKSEKVLCKYFHSQNLQKAVTTETIRDLQPGKSYLLDVYVVGHGGHSVKYQSKIVKTRKVC.

Positions 1–19 are cleaved as a signal peptide; that stretch reads MELFYWCLLCLLLPLTSRT. 2 Fibronectin type-III domains span residues 261-331 and 445-564; these read NLGK…VGAF and PSLP…IVKT. 2 N-linked (GlcNAc...) asparagine glycosylation sites follow: Asn322 and Asn488.

As to quaternary structure, binds heparin and chondroitin sulfate. O-glycosylated; contains heparan sulfate and chondroitin sulfate. Post-translationally, N-glycosylated. As to expression, expressed in brain and spinal cord with no expression detected in heart, kidney or liver. Expressed by neurons but not by astrocytes. In the brain, detected in the cerebrum, cerebellum and olfactory bulbs. In the cerebral cortex, highly expressed in Cajal-Retzius cells. Also expressed in hippocampal neurons and in Purkinje and granule cells of the cerebellum (at protein level). Expressed in neurons along the GnRH migratory route.

It localises to the secreted. Secretory protein that plays a role in various cellular processes. Acts as a chemorepellent acting on gonadotropin-releasing hormone (GnRH) expressing neurons regulating their migration to the hypothalamus. Also promotes neuron migration, growth and survival as well as neurite outgrowth and is involved in the development of the olfactory system. May also act through the regulation of growth factors activity and downstream signaling. Also regulates extracellular matrix assembly and cell adhesiveness. Promotes endothelial cell survival, vessel formation and plays an important role in the process of revascularization through NOS3-dependent mechanisms. The protein is Protein NDNF (Ndnf) of Mus musculus (Mouse).